A 63-amino-acid polypeptide reads, in one-letter code: SERF-like protein C1705.02 (63 aa).

Positions M1–R13 are enriched in basic and acidic residues. Positions M1–K63 are disordered. The span at N14 to K24 shows a compositional bias: basic residues. Basic and acidic residues predominate over residues Q25 to A35.

It belongs to the SERF family.

It is found in the cytoplasm. Its subcellular location is the nucleus. The protein resides in the nucleolus. This is SERF-like protein C1705.02 from Schizosaccharomyces pombe (strain 972 / ATCC 24843) (Fission yeast).